Reading from the N-terminus, the 905-residue chain is Transcriptional regulator MNL1 (905 aa).

Residues 1–29 (MDSHNNIDQSVSELLSDPASVQQSYNSQL) show a composition bias toward polar residues. 8 disordered regions span residues 1 to 34 (MDSH…GPEF), 312 to 340 (QTQA…ASHT), 383 to 419 (MDQV…NARY), 434 to 460 (SEKN…NLLS), 525 to 544 (TKEE…KPKR), 584 to 613 (NISS…SESS), 625 to 671 (NVGK…GTVE), and 685 to 733 (PASE…TSST). Residues 312–334 (QTQAQAQAHQQQQQQSQQQHSPQ) show a composition bias toward low complexity. Residues 439 to 460 (NHNNRSPPTPPTSTSSPQNLLS) show a composition bias toward low complexity. Polar residues predominate over residues 584 to 598 (NISSHHSSGTPSITT). Positions 628–639 (KRKNKSYRKPKG) are enriched in basic residues. Composition is skewed to low complexity over residues 647–669 (QQQQ…STGT) and 690–710 (SSLL…EASS). 2 consecutive C2H2-type zinc fingers follow at residues 832-855 (YLCN…RSLH) and 861-883 (YNCD…LKIH). The disordered stretch occupies residues 885-905 (QEDEKDCADAETGVGMDDASG).

It localises to the nucleus. Its function is as follows. Transcription factor that activates stress response genes via SLE (STRE-like) elements. Required for adaptation to weak acid stress such as acetic acid stress, but seems not involved in the response to heat, osmotic, ethanol, nutrient, oxidative, or heavy-metal stress. Activates a subset of the genes that are repressed by NRG1. This Candida albicans (strain SC5314 / ATCC MYA-2876) (Yeast) protein is Transcriptional regulator MNL1 (MNL1).